Consider the following 93-residue polypeptide: UPF0337 protein Bd3330 (93 aa).

It belongs to the UPF0337 (CsbD) family.

In Bdellovibrio bacteriovorus (strain ATCC 15356 / DSM 50701 / NCIMB 9529 / HD100), this protein is UPF0337 protein Bd3330.